Consider the following 285-residue polypeptide: RNA 5'-monophosphate methyltransferase (285 aa).

A disordered region spans residues 1 to 28; sequence MAATQELSKGGVEEAVEEDDPAALKPGA. S-adenosyl-L-methionine is bound by residues Arg-46, Asn-77, Asp-111, 136-137, and Met-165; that span reads DI. In terms of domain architecture, Bin3-type SAM spans 53–275; sequence ELLRQLFPPE…KHTEETQAIP (223 aa).

This sequence belongs to the methyltransferase superfamily. Interacts with DICER1; the interaction may be mediated by RNA.

It localises to the cytoplasm. It carries out the reaction a 5'-end 5'-phospho-ribonucleoside-RNA + S-adenosyl-L-methionine = a 5'-end (5'-methylphospho)-ribonucleoside-RNA + S-adenosyl-L-homocysteine. The enzyme catalyses a 5'-end 5'-phospho-ribonucleoside-RNA + 2 S-adenosyl-L-methionine = a 5'-end (5'-bismethylphospho)-ribonucleoside-RNA + 2 S-adenosyl-L-homocysteine. Functionally, O-methyltransferase that specifically monomethylates 5'-monophosphate of cytoplasmic histidyl tRNA (tRNA(His)), acting as a capping enzyme by protecting tRNA(His) from cleavage by DICER1. Also able, with less efficiently, to methylate the 5' monophosphate of a subset of pre-miRNAs, acting as a negative regulator of miRNA processing. The 5' monophosphate of pre-miRNAs is recognized by DICER1 and is required for pre-miRNAs processing: methylation at this position reduces the processing of pre-miRNAs by DICER1. Was also reported to mediate dimethylation of pre-miR-145; however dimethylation cannot be reproduced by another group which observes a monomethylation of pre-miR-145. The polypeptide is RNA 5'-monophosphate methyltransferase (Rattus norvegicus (Rat)).